A 213-amino-acid chain; its full sequence is Viral dihydrofolate reductase (213 aa).

In terms of domain architecture, DHFR spans 4 to 184 (LLNCIVAVDQ…IKYKFEVYEK (181 aa)). Residues A10 and 16-22 (GIGKKGH) contribute to the NADP(+) site. Substrate is bound at residue 31-36 (DFKYFQ). NADP(+) is bound at residue 54 to 56 (KNT). Substrate is bound at residue R70. NADP(+)-binding positions include 76–78 (SKK) and 116–123 (GGSSVYKD).

This sequence belongs to the dihydrofolate reductase family.

The enzyme catalyses (6S)-5,6,7,8-tetrahydrofolate + NADP(+) = 7,8-dihydrofolate + NADPH + H(+). It participates in cofactor biosynthesis; tetrahydrofolate biosynthesis; 5,6,7,8-tetrahydrofolate from 7,8-dihydrofolate: step 1/1. Functionally, key enzyme in folate metabolism. Catalyzes an essential reaction for de novo glycine and purine synthesis, and for DNA precursor synthesis. The sequence is that of Viral dihydrofolate reductase (DHFR) from Saimiri sciureus (Common squirrel monkey).